An 89-amino-acid polypeptide reads, in one-letter code: Otospiralin (89 aa).

The signal sequence occupies residues 1 to 21 (MQPCVLWWLALGLLLGIPAGA).

This sequence belongs to the otospiralin family. Ear specific. Expressed in the cochlea and vestibule, but not in the cochlear nerve, cochlear nucleus, spinal chord, muscle, cerebral cortex, cerebellum, diencephalon and olfactory bulb. In the cochlea, expressed in fibrocytes of the spiral limbus, spiral ligament and suprastrial zone. In the vestibule, expressed in cells located to the stroma below the macular and crista sensory epithelia and in the subepithelial layer of the walls of semicircular canals and maculae.

Its subcellular location is the secreted. In terms of biological role, may be essential for the survival of the neurosensory epithelium of the inner ear. This Rattus norvegicus (Rat) protein is Otospiralin (Otos).